Here is a 311-residue protein sequence, read N- to C-terminus: Malate dehydrogenase (311 aa).

NAD(+) is bound by residues 7 to 13 (GAAGGIG) and aspartate 34. Substrate is bound by residues arginine 81 and arginine 87. NAD(+) is bound by residues asparagine 94 and 117-119 (ITN). Substrate is bound by residues asparagine 119 and arginine 153. Residue histidine 177 is the Proton acceptor of the active site. NAD(+) is bound at residue methionine 227.

It belongs to the LDH/MDH superfamily. MDH type 1 family. As to quaternary structure, homodimer.

It catalyses the reaction (S)-malate + NAD(+) = oxaloacetate + NADH + H(+). Functionally, catalyzes the reversible oxidation of malate to oxaloacetate. The protein is Malate dehydrogenase of Shewanella denitrificans (strain OS217 / ATCC BAA-1090 / DSM 15013).